The chain runs to 257 residues: NAD-capped RNA hydrolase NudC (257 aa).

Residue arginine 69 coordinates substrate. Zn(2+) contacts are provided by cysteine 98 and cysteine 101. Glutamate 111 serves as a coordination point for substrate. Residues cysteine 116 and cysteine 119 each coordinate Zn(2+). Tyrosine 124 is a substrate binding site. The Nudix hydrolase domain occupies 125-248 (PQIAPCIIVA…TVARRLIEDT (124 aa)). A divalent metal cation contacts are provided by alanine 158, glutamate 174, and glutamate 178. The Nudix box signature appears at 159 to 180 (GFVEVGETLEQAVAREVMEESG). 192-199 (QPWPFPQS) is a substrate binding site. Glutamate 219 lines the a divalent metal cation pocket. Substrate is bound at residue alanine 241.

This sequence belongs to the Nudix hydrolase family. NudC subfamily. As to quaternary structure, homodimer. The cofactor is Mg(2+). Mn(2+) is required as a cofactor. Requires Zn(2+) as cofactor.

It carries out the reaction a 5'-end NAD(+)-phospho-ribonucleoside in mRNA + H2O = a 5'-end phospho-adenosine-phospho-ribonucleoside in mRNA + beta-nicotinamide D-ribonucleotide + 2 H(+). The catalysed reaction is NAD(+) + H2O = beta-nicotinamide D-ribonucleotide + AMP + 2 H(+). It catalyses the reaction NADH + H2O = reduced beta-nicotinamide D-ribonucleotide + AMP + 2 H(+). Functionally, mRNA decapping enzyme that specifically removes the nicotinamide adenine dinucleotide (NAD) cap from a subset of mRNAs by hydrolyzing the diphosphate linkage to produce nicotinamide mononucleotide (NMN) and 5' monophosphate mRNA. The NAD-cap is present at the 5'-end of some mRNAs and stabilizes RNA against 5'-processing. Has preference for mRNAs with a 5'-end purine. Catalyzes the hydrolysis of a broad range of dinucleotide pyrophosphates. The sequence is that of NAD-capped RNA hydrolase NudC from Klebsiella pneumoniae subsp. pneumoniae (strain ATCC 700721 / MGH 78578).